A 228-amino-acid polypeptide reads, in one-letter code: Cytidylate kinase (228 aa).

11-19 (GPAGTGKSS) contributes to the ATP binding site.

The protein belongs to the cytidylate kinase family. Type 1 subfamily.

It is found in the cytoplasm. The enzyme catalyses CMP + ATP = CDP + ADP. It carries out the reaction dCMP + ATP = dCDP + ADP. This is Cytidylate kinase from Mycolicibacterium paratuberculosis (strain ATCC BAA-968 / K-10) (Mycobacterium paratuberculosis).